Consider the following 938-residue polypeptide: Isoleucine--tRNA ligase (938 aa).

Positions 58-68 match the 'HIGH' region motif; sequence PYANGNIHIGH. Position 563 (Glu563) interacts with L-isoleucyl-5'-AMP. A 'KMSKS' region motif is present at residues 604 to 608; it reads KMSKS. Lys607 provides a ligand contact to ATP. Cys903, Cys906, Cys921, and Cys924 together coordinate Zn(2+).

The protein belongs to the class-I aminoacyl-tRNA synthetase family. IleS type 1 subfamily. Monomer. Requires Zn(2+) as cofactor.

The protein localises to the cytoplasm. The catalysed reaction is tRNA(Ile) + L-isoleucine + ATP = L-isoleucyl-tRNA(Ile) + AMP + diphosphate. In terms of biological role, catalyzes the attachment of isoleucine to tRNA(Ile). As IleRS can inadvertently accommodate and process structurally similar amino acids such as valine, to avoid such errors it has two additional distinct tRNA(Ile)-dependent editing activities. One activity is designated as 'pretransfer' editing and involves the hydrolysis of activated Val-AMP. The other activity is designated 'posttransfer' editing and involves deacylation of mischarged Val-tRNA(Ile). The protein is Isoleucine--tRNA ligase of Buchnera aphidicola subsp. Schizaphis graminum (strain Sg).